A 150-amino-acid chain; its full sequence is Large ribosomal subunit protein bL9 (150 aa).

The protein belongs to the bacterial ribosomal protein bL9 family.

Its function is as follows. Binds to the 23S rRNA. The polypeptide is Large ribosomal subunit protein bL9 (Burkholderia mallei (strain NCTC 10247)).